The sequence spans 100 residues: Small ribosomal subunit protein bS20 (100 aa).

Residues 1 to 22 (MASGKPKKKNPRLASGRKRARQ) are compositionally biased toward basic residues. Positions 1–26 (MASGKPKKKNPRLASGRKRARQGLKL) are disordered.

This sequence belongs to the bacterial ribosomal protein bS20 family.

Its function is as follows. Binds directly to 16S ribosomal RNA. This is Small ribosomal subunit protein bS20 from Acidovorax ebreus (strain TPSY) (Diaphorobacter sp. (strain TPSY)).